Here is a 1333-residue protein sequence, read N- to C-terminus: Aldehyde oxidase 1 (1333 aa).

A 2Fe-2S ferredoxin-type domain is found at 4–91; the sequence is PQLLFYVNGQ…GTAVTTVEGI (88 aa). The [2Fe-2S] cluster site is built by Cys-43, Cys-48, Cys-51, and Cys-73. Gln-112 is a binding site for Mo-molybdopterin. [2Fe-2S] cluster-binding residues include Cys-113, Cys-116, Cys-148, and Cys-150. Cys-150 provides a ligand contact to Mo-molybdopterin. The 186-residue stretch at 235–420 folds into the FAD-binding PCMH-type domain; the sequence is FYSNRMTWIS…VSVNIPCSRK (186 aa). FAD is bound by residues 263–270, Ala-344, Ser-353, His-357, Asp-366, and Leu-410; that span reads IVMGYTSV. Residues 801–802 and Met-1042 each bind Mo-molybdopterin; that span reads AF. Ser-1063 bears the Phosphoserine mark. Mo-molybdopterin-binding positions include 1083–1086, Gln-1198, and Leu-1263; that span reads GSVV. The active-site Proton acceptor; for azaheterocycle hydroxylase activity is the Glu-1265.

The protein belongs to the xanthine dehydrogenase family. As to quaternary structure, homodimer. It depends on [2Fe-2S] cluster as a cofactor. FAD is required as a cofactor. Mo-molybdopterin serves as cofactor. Post-translationally, the N-terminus is blocked. Expression in liver (at protein level). Also detected in heart, lung, spleen and kidney.

The protein localises to the cytoplasm. It carries out the reaction an aldehyde + O2 + H2O = a carboxylate + H2O2 + H(+). The enzyme catalyses retinal + O2 + H2O = retinoate + H2O2 + H(+). Its activity is regulated as follows. Inhibited by menadione and isovanillin. Not inhibited by allopurinol, a xanthine dehydrogenase potent inhibitor. Inhibited by the flavonoids quercetin, myricetin and genistein. Nitric oxide generation is inhibited by raloxifene and competitively inhibited by an increase in oxygen levels. In terms of biological role, oxidase with broad substrate specificity, oxidizing aromatic azaheterocycles, such as N1-methylnicotinamide, N-methylphthalazinium and phthalazine, as well as aldehydes, such as benzaldehyde, retinal, pyridoxal, and vanillin. Plays a role in the metabolism of xenobiotics and drugs containing aromatic azaheterocyclic substituents. Participates in the bioactivation of prodrugs such as famciclovir, catalyzing the oxidation step from 6-deoxypenciclovir to penciclovir, which is a potent antiviral agent. Is probably involved in the regulation of reactive oxygen species homeostasis. Is a prominent source of superoxide generation via the one-electron reduction of molecular oxygen. Also catalyzes nitric oxide (NO) production; under anaerobic conditions, reduces nitrite to NO with NADH or aldehyde as electron donor, but under aerobic conditions, NADH is the preferred substrate. These reactions may be catalyzed by several isozymes. May play a role in adipogenesis. This chain is Aldehyde oxidase 1, found in Rattus norvegicus (Rat).